The following is a 497-amino-acid chain: Probable malate:quinone oxidoreductase (497 aa).

It belongs to the MQO family. FAD serves as cofactor.

The enzyme catalyses (S)-malate + a quinone = a quinol + oxaloacetate. It functions in the pathway carbohydrate metabolism; tricarboxylic acid cycle; oxaloacetate from (S)-malate (quinone route): step 1/1. This is Probable malate:quinone oxidoreductase from Prochlorococcus marinus subsp. pastoris (strain CCMP1986 / NIES-2087 / MED4).